Consider the following 315-residue polypeptide: MNPNFLDFEQPIADLQAKIEGLRLVGNDNSLNISDEIARLQDKSNTLTESIFGNLTSWQIARLARHPRRPYTLDYLEHIFTEFEELHGDRHFSDDAAIVGGTARLDGKPVMVIGHQKGREVREKVRRNFGMPRPEGYRKACRLMEMAERFKMPILTFIDTPGAYPGIDAEERNQSEAIAWNLRVMARLKTPIIATVIGEGGSGGALAIGVCDQLNMLQYSTYSVISPEGCASILWKTADKAADAAEAMGITAERLKSLNIVDKVIQEPLGGAHRDPAKMSESIRADLVQQLDMLGKFDNDALLARRYERLMSYGL.

The CoA carboxyltransferase C-terminal domain maps to 32-293; the sequence is NISDEIARLQ…RADLVQQLDM (262 aa).

Belongs to the AccA family. Acetyl-CoA carboxylase is a heterohexamer composed of biotin carboxyl carrier protein (AccB), biotin carboxylase (AccC) and two subunits each of ACCase subunit alpha (AccA) and ACCase subunit beta (AccD).

Its subcellular location is the cytoplasm. The enzyme catalyses N(6)-carboxybiotinyl-L-lysyl-[protein] + acetyl-CoA = N(6)-biotinyl-L-lysyl-[protein] + malonyl-CoA. Its pathway is lipid metabolism; malonyl-CoA biosynthesis; malonyl-CoA from acetyl-CoA: step 1/1. Component of the acetyl coenzyme A carboxylase (ACC) complex. First, biotin carboxylase catalyzes the carboxylation of biotin on its carrier protein (BCCP) and then the CO(2) group is transferred by the carboxyltransferase to acetyl-CoA to form malonyl-CoA. The protein is Acetyl-coenzyme A carboxylase carboxyl transferase subunit alpha of Pseudomonas putida (strain ATCC 47054 / DSM 6125 / CFBP 8728 / NCIMB 11950 / KT2440).